Consider the following 471-residue polypeptide: 6-phosphofructo-2-kinase/fructose-2,6-bisphosphatase 1 (471 aa).

Position 2 is an N-acetylserine (Ser-2). The interval 2–250 (SQEMGELTQT…VYYLMNIHVT (249 aa)) is 6-phosphofructo-2-kinase. Ser-33 carries the phosphoserine; by PKA modification. 49-57 (GLPARGKTY) serves as a coordination point for ATP. Residues Arg-82 and Arg-105 each coordinate beta-D-fructose 6-phosphate. Residue Asp-131 is part of the active site. Beta-D-fructose 6-phosphate is bound by residues Thr-133 and Arg-139. At Ser-141 the chain carries Phosphoserine. Residue Cys-161 is part of the active site. 170–175 (NIRQVK) contributes to the ATP binding site. Beta-D-fructose 6-phosphate contacts are provided by Lys-175, Arg-196, and Tyr-200. A fructose-2,6-bisphosphatase region spans residues 251–471 (PRSIYLCRHG…EALDTVPAHY (221 aa)). Arg-258 contacts beta-D-fructose 2,6-bisphosphate. The active-site Tele-phosphohistidine intermediate is His-259. Beta-D-fructose 2,6-bisphosphate contacts are provided by Asn-265, Gly-271, and Arg-308. The Proton donor/acceptor role is filled by Glu-328. Residues Tyr-339, Arg-353, Lys-357, Tyr-368, Gln-394, and Arg-398 each coordinate beta-D-fructose 2,6-bisphosphate. Residue 350-353 (FALR) coordinates ATP. ATP-binding positions include 394-398 (QAVMR) and Tyr-430.

In the C-terminal section; belongs to the phosphoglycerate mutase family. As to quaternary structure, homodimer. In terms of tissue distribution, liver.

The catalysed reaction is beta-D-fructose 2,6-bisphosphate + H2O = beta-D-fructose 6-phosphate + phosphate. The enzyme catalyses beta-D-fructose 6-phosphate + ATP = beta-D-fructose 2,6-bisphosphate + ADP + H(+). Its activity is regulated as follows. Phosphorylation at Ser-33 inhibits the kinase and activates the bisphosphatase. Synthesis and degradation of fructose 2,6-bisphosphate. The sequence is that of 6-phosphofructo-2-kinase/fructose-2,6-bisphosphatase 1 from Bos taurus (Bovine).